The following is a 213-amino-acid chain: Thymidylate kinase (213 aa).

10-17 (GPDGAGKT) is a binding site for ATP.

It belongs to the thymidylate kinase family.

It carries out the reaction dTMP + ATP = dTDP + ADP. In terms of biological role, phosphorylation of dTMP to form dTDP in both de novo and salvage pathways of dTTP synthesis. The polypeptide is Thymidylate kinase (Limosilactobacillus reuteri (strain DSM 20016) (Lactobacillus reuteri)).